Here is a 319-residue protein sequence, read N- to C-terminus: ATP-dependent 6-phosphofructokinase (319 aa).

Residue glycine 11 participates in ATP binding. 21–25 (RAVVR) contacts ADP. ATP contacts are provided by residues 72–73 (RY) and 102–105 (GDGS). A Mg(2+)-binding site is contributed by aspartate 103. 125–127 (TID) lines the substrate pocket. Residue aspartate 127 is the Proton acceptor of the active site. Residue arginine 154 coordinates ADP. Substrate is bound by residues arginine 162 and 169–171 (MGR). Residues 185–187 (GAE), arginine 211, and 213–215 (KKH) each bind ADP. Residues glutamate 222, arginine 243, and 249–252 (HVQR) contribute to the substrate site.

It belongs to the phosphofructokinase type A (PFKA) family. ATP-dependent PFK group I subfamily. Prokaryotic clade 'B1' sub-subfamily. Homotetramer. It depends on Mg(2+) as a cofactor.

It localises to the cytoplasm. It catalyses the reaction beta-D-fructose 6-phosphate + ATP = beta-D-fructose 1,6-bisphosphate + ADP + H(+). It participates in carbohydrate degradation; glycolysis; D-glyceraldehyde 3-phosphate and glycerone phosphate from D-glucose: step 3/4. Its activity is regulated as follows. Allosterically activated by ADP and other diphosphonucleosides, and allosterically inhibited by phosphoenolpyruvate. Functionally, catalyzes the phosphorylation of D-fructose 6-phosphate to fructose 1,6-bisphosphate by ATP, the first committing step of glycolysis. This chain is ATP-dependent 6-phosphofructokinase, found in Listeria welshimeri serovar 6b (strain ATCC 35897 / DSM 20650 / CCUG 15529 / CIP 8149 / NCTC 11857 / SLCC 5334 / V8).